We begin with the raw amino-acid sequence, 465 residues long: GTPase Der (465 aa).

2 consecutive EngA-type G domains span residues 3-167 (PLVA…PERG) and 179-352 (IHIA…VSAL). GTP contacts are provided by residues 9 to 16 (GRPNVGKS), 57 to 61 (DTGGM), 119 to 122 (NKID), 185 to 192 (GRPNVGKS), 232 to 236 (DTAGL), and 297 to 300 (NKWD). One can recognise a KH-like domain in the interval 353 to 437 (RQFSTSEVNK…PVRFLFREGD (85 aa)).

It belongs to the TRAFAC class TrmE-Era-EngA-EngB-Septin-like GTPase superfamily. EngA (Der) GTPase family. As to quaternary structure, associates with the 50S ribosomal subunit.

Its function is as follows. GTPase that plays an essential role in the late steps of ribosome biogenesis. The protein is GTPase Der of Xylella fastidiosa (strain 9a5c).